An 851-amino-acid chain; its full sequence is Transforming growth factor beta receptor type 3 (851 aa).

An N-terminal signal peptide occupies residues 1–20; that stretch reads MTSHYVIAIFALMSSCLATA. The Extracellular portion of the chain corresponds to 21-787; it reads GPEPGALCEL…IFHGLDTLTV (767 aa). Residues C52 and C197 are joined by a disulfide bond. 2 N-linked (GlcNAc...) asparagine glycosylation sites follow: N141 and N492. Residues 455–730 form the ZP domain; that stretch reads KCDNEKMIVA…PKCVPPDEAC (276 aa). S534 and S545 each carry an O-linked (Xyl...) (glycosaminoglycan) serine glycan. 3 N-linked (GlcNAc...) asparagine glycosylation sites follow: N571, N590, and N697. Disulfide bonds link C639-C705, C660-C730, and C710-C723. The tract at residues 737–751 is interaction with TGF-beta ligand; the sequence is IIWAMMQNKKTFTKP. Residues 788–809 form a helical membrane-spanning segment; the sequence is MGIAFAAFVIGALLTGALWYIY. The Cytoplasmic segment spans residues 810 to 851; sequence SHTGETAGRQQVPTSPPASENSSAAHSIGSTQSTPCSSSSTA. The disordered stretch occupies residues 816-851; it reads AGRQQVPTSPPASENSSAAHSIGSTQSTPCSSSSTA. Residues 817 to 834 are compositionally biased toward polar residues; the sequence is GRQQVPTSPPASENSSAA. Residues 836 to 851 show a composition bias toward low complexity; the sequence is SIGSTQSTPCSSSSTA. T840 bears the Phosphothreonine mark.

Forms homodimers and homooligomers. Interacts with DYNLT4. Interacts with integrin ITGA5:ITGB1; this interaction promotes the internalization and trafficking of ITGA5:ITGB1 into endocytic vesicles. Interacts with TGFB1, BMP2, BMP5, BMP7 or GDF5 and inhibin A via the ligand binding domains. Interacts with ALK3/BMPR1A; this interaction results in the cell surface retention of BMPR1A. Interacts with ALK6/BMPR1B; this interaction enhances BMPR1B-mediated stimulation of the BMP signaling pathway. Interacts with the scaffolding protein beta-arrestin2/ARRB2; this interaction mediates internalization of TGFBR3 and thus regulates migration, actin cytoskeleton and activation of CDC42. In terms of assembly, (Microbial infection) Interacts with human cytomegalovirus trimer complex composed of gH, gL, and gO; these interactions may promote HCMV cell entry in specific cell types. Extensively modified by glycosaminoglycan groups (GAG). Post-translationally, phosphorylated in the cytoplasmic domain by the type II receptor TGFBR2 at THR-840 to mediate recruitment of ARRB2 and subsequent internalization of TGFBR2 and TGFBR3.

It localises to the cell membrane. It is found in the secreted. The protein localises to the extracellular space. The protein resides in the extracellular matrix. In terms of biological role, cell surface receptor that regulates diverse cellular processes including cell proliferation, differentiation, migration, and apoptosis. Initiates BMP, inhibin, and TGF-beta signaling pathways by interacting with different ligands including TGFB1, BMP2, BMP5, BMP7 or GDF5. Alternatively, acts as a cell surface coreceptor for BMP ligands, serving to enhance ligand binding by differentially regulating BMPR1A/ALK3 and BMPR1B/ALK6 receptor trafficking. Promotes epithelial cell adhesion, focal adhesion formation and integrin signaling during epithelial cell spreading on fibronectin. By interacting with the scaffolding protein beta-arrestin2/ARRB2, regulates migration or actin cytoskeleton and promotes the activation of CDC42 as well as the inhibition of NF-kappa-B. In gonadotrope cells, acts as an inhibin A coreceptor and regulates follicle-stimulating hormone (FSH) levels and female fertility. Plays a role in the inhibition of directed and random cell migration in epithelial cells by altering the actin cytoskeletal organization. Participates in epithelial-mesenchymal transformation (EMT) upon binding to BMP2 or TGFB2, by activating the PAR6/SMURF1/RHOA pathway. Functionally, (Microbial infection) May act as a receptor for human cytomegalovirus in different cell types by interacting with HCMV trimer composed of GO, GH and GL. This chain is Transforming growth factor beta receptor type 3, found in Homo sapiens (Human).